The sequence spans 81 residues: Large ribosomal subunit protein bL27 (81 aa).

Positions 1–11 (MATSKSGGSSK) are enriched in polar residues. The segment at 1-20 (MATSKSGGSSKNGRDSISKR) is disordered.

Belongs to the bacterial ribosomal protein bL27 family.

The chain is Large ribosomal subunit protein bL27 from Borreliella afzelii (strain PKo) (Borrelia afzelii).